The primary structure comprises 280 residues: Shikimate dehydrogenase (NADP(+)) (280 aa).

Residues 15 to 17 (SLS) and T62 each bind shikimate. The Proton acceptor role is filled by K66. Shikimate is bound by residues N88 and D104. NADP(+) is bound by residues 128–132 (GAGGA), 151–156 (NRTEGR), and I222. Y224 contacts shikimate. G245 contacts NADP(+).

This sequence belongs to the shikimate dehydrogenase family. Homodimer.

The enzyme catalyses shikimate + NADP(+) = 3-dehydroshikimate + NADPH + H(+). Its pathway is metabolic intermediate biosynthesis; chorismate biosynthesis; chorismate from D-erythrose 4-phosphate and phosphoenolpyruvate: step 4/7. Involved in the biosynthesis of the chorismate, which leads to the biosynthesis of aromatic amino acids. Catalyzes the reversible NADPH linked reduction of 3-dehydroshikimate (DHSA) to yield shikimate (SA). In Methanosarcina barkeri (strain Fusaro / DSM 804), this protein is Shikimate dehydrogenase (NADP(+)).